We begin with the raw amino-acid sequence, 658 residues long: Translation factor GUF1, mitochondrial (658 aa).

A tr-type G domain is found at Glu-45–Thr-231. GTP-binding positions include Ala-54–Ser-61, Asp-123–His-127, and Asn-177–Asp-180.

The protein belongs to the TRAFAC class translation factor GTPase superfamily. Classic translation factor GTPase family. LepA subfamily.

The protein resides in the mitochondrion inner membrane. It catalyses the reaction GTP + H2O = GDP + phosphate + H(+). Functionally, promotes mitochondrial protein synthesis. May act as a fidelity factor of the translation reaction, by catalyzing a one-codon backward translocation of tRNAs on improperly translocated ribosomes. Binds to mitochondrial ribosomes in a GTP-dependent manner. The protein is Translation factor GUF1, mitochondrial of Vanderwaltozyma polyspora (strain ATCC 22028 / DSM 70294 / BCRC 21397 / CBS 2163 / NBRC 10782 / NRRL Y-8283 / UCD 57-17) (Kluyveromyces polysporus).